The chain runs to 557 residues: Mercuric reductase (557 aa).

The HMA domain maps to 1 to 65 (MILLSIEGMT…AIEALGYIAK (65 aa)). Cys11 and Cys14 together coordinate a metal cation. FAD contacts are provided by Ala106 and Ala126. Cys133 and Cys138 are joined by a disulfide. Lys142, Ala207, Asp399, and Val407 together coordinate FAD. The Hg(2+) site is built by Cys554 and Cys555.

It belongs to the class-I pyridine nucleotide-disulfide oxidoreductase family. In terms of assembly, homodimer. FAD is required as a cofactor.

The catalysed reaction is Hg + NADP(+) + H(+) = Hg(2+) + NADPH. Functionally, resistance to Hg(2+) in bacteria appears to be governed by a specialized system which includes mercuric reductase. MerA protein is responsible for volatilizing mercury as Hg(0). This is Mercuric reductase (merA) from Shewanella putrefaciens (Pseudomonas putrefaciens).